A 492-amino-acid chain; its full sequence is Ketol-acid reductoisomerase (NADP(+)) (492 aa).

Residues 15–208 (AQLGKCRFMA…GGHRAGVLEF (194 aa)) enclose the KARI N-terminal Rossmann domain. NADP(+) is bound by residues 45–48 (CGAQ), R68, R76, S78, and 108–110 (DKQ). Residue H132 is part of the active site. Residue G158 participates in NADP(+) binding. KARI C-terminal knotted domains lie at 209-344 (SFVA…NAPQ) and 345-485 (FEGK…MTDM). The Mg(2+) site is built by D217, E221, E389, and E393. Position 414 (S414) interacts with substrate.

The protein belongs to the ketol-acid reductoisomerase family. Requires Mg(2+) as cofactor.

It catalyses the reaction (2R)-2,3-dihydroxy-3-methylbutanoate + NADP(+) = (2S)-2-acetolactate + NADPH + H(+). It carries out the reaction (2R,3R)-2,3-dihydroxy-3-methylpentanoate + NADP(+) = (S)-2-ethyl-2-hydroxy-3-oxobutanoate + NADPH + H(+). Its pathway is amino-acid biosynthesis; L-isoleucine biosynthesis; L-isoleucine from 2-oxobutanoate: step 2/4. The protein operates within amino-acid biosynthesis; L-valine biosynthesis; L-valine from pyruvate: step 2/4. Functionally, involved in the biosynthesis of branched-chain amino acids (BCAA). Catalyzes an alkyl-migration followed by a ketol-acid reduction of (S)-2-acetolactate (S2AL) to yield (R)-2,3-dihydroxy-isovalerate. In the isomerase reaction, S2AL is rearranged via a Mg-dependent methyl migration to produce 3-hydroxy-3-methyl-2-ketobutyrate (HMKB). In the reductase reaction, this 2-ketoacid undergoes a metal-dependent reduction by NADPH to yield (R)-2,3-dihydroxy-isovalerate. The sequence is that of Ketol-acid reductoisomerase (NADP(+)) from Yersinia pestis bv. Antiqua (strain Antiqua).